Reading from the N-terminus, the 431-residue chain is Argininosuccinate lyase (431 aa).

This sequence belongs to the lyase 1 family. Argininosuccinate lyase subfamily.

The protein resides in the cytoplasm. It carries out the reaction 2-(N(omega)-L-arginino)succinate = fumarate + L-arginine. Its pathway is amino-acid biosynthesis; L-arginine biosynthesis; L-arginine from L-ornithine and carbamoyl phosphate: step 3/3. The protein is Argininosuccinate lyase of Xanthomonas oryzae pv. oryzae (strain MAFF 311018).